The sequence spans 1873 residues: SAGA complex subunit Spt20 (1873 aa).

It belongs to the SPT20 family. In terms of assembly, component of the Spt-Ada-Gcn5 acetyltransferase (SAGA) complex consisting of wda/Taf5L, Saf6, Taf9, Taf10b, Taf12, Ada1, Spt3, Spt7, Spt20, Sf3b3, Sf3b5, Nipped-A/Tra1, a histone acetyltransferase (HAT) module made up of Gcn5, Ada2b (Isoform B), Ada3 and Sgf29, and a deubiquitinase (DUB) module made up of not/nonstop, Sgf11 and e(y)2 tethered to SAGA by Atxn7.

The protein resides in the nucleus. Component of the transcription regulatory complex SAGA, a multiprotein complex that activates transcription by remodeling chromatin and mediating histone acetylation and deubiquitination. The SAGA complex predominantly acetylates histone H3. This Drosophila melanogaster (Fruit fly) protein is SAGA complex subunit Spt20.